The primary structure comprises 147 residues: Phospholipase A2-beta (147 aa).

Residues 1-28 (MMFRTSLMRFAAAFFAIVFVVLVGVARS) form the signal peptide. Disulfide bonds link C31–C58, C35–C64, C40–C117, C51–C71, C70–C95, and C77–C88. Ca(2+) is bound by residues Y50, G52, and H55. The active site involves H74. D75 contributes to the Ca(2+) binding site. The Prevents secretion from ER signature appears at 144 to 147 (KTEL).

This sequence belongs to the phospholipase A2 family. Ca(2+) serves as cofactor. Ubiquitous but expressed at a low level. Detected in vascular tissues and in the guard cells. Predominantly detected in pollen.

The protein resides in the secreted. Its subcellular location is the endoplasmic reticulum. The enzyme catalyses a 1,2-diacyl-sn-glycero-3-phosphocholine + H2O = a 1-acyl-sn-glycero-3-phosphocholine + a fatty acid + H(+). Its activity is regulated as follows. Inhibited by aristolochic acid. Its function is as follows. PA2 catalyzes the calcium-dependent hydrolysis of the 2-acyl groups in 3-sn-phosphoglycerides. Releases lysophospholipids (LPLs) and free fatty acids (FFAs) from membrane phospholipids in response to hormones and other external stimuli. Regulates the process of cell elongation and plays important roles in shoot gravitropism by mediating auxin-induced cell elongation. Involved in stomatal opening in response to light. Plays a role in pollen development and germination and tube growth. The chain is Phospholipase A2-beta (PLA2-BETA) from Arabidopsis thaliana (Mouse-ear cress).